Reading from the N-terminus, the 176-residue chain is 3-hydroxyanthranilate 3,4-dioxygenase (176 aa).

Arg44 lines the O2 pocket. Residues His48, Glu54, and His92 each contribute to the Fe cation site. Residue Glu54 coordinates substrate. The substrate site is built by Arg96 and Glu106. The Fe cation site is built by Cys121, Cys124, Cys158, and Cys161.

This sequence belongs to the 3-HAO family. As to quaternary structure, homodimer. It depends on Fe(2+) as a cofactor.

It carries out the reaction 3-hydroxyanthranilate + O2 = (2Z,4Z)-2-amino-3-carboxymuconate 6-semialdehyde. It participates in cofactor biosynthesis; NAD(+) biosynthesis; quinolinate from L-kynurenine: step 3/3. In terms of biological role, catalyzes the oxidative ring opening of 3-hydroxyanthranilate to 2-amino-3-carboxymuconate semialdehyde, which spontaneously cyclizes to quinolinate. In Xanthomonas oryzae pv. oryzae (strain MAFF 311018), this protein is 3-hydroxyanthranilate 3,4-dioxygenase.